The sequence spans 984 residues: Ephrin type-B receptor 1 (984 aa).

In terms of domain architecture, Eph LBD spans 1 to 182 (ETLMDTRTAT…FFKKCPSVVQ (182 aa)). Topologically, residues 1–541 (ETLMDTRTAT…KSELREQLPL (541 aa)) are extracellular. Fibronectin type-III domains lie at 303 to 413 (VPSG…TNQA) and 414 to 528 (APST…TLTD). N-linked (GlcNAc...) asparagine glycans are attached at residues asparagine 315, asparagine 407, and asparagine 480. Residues 542-562 (IAGSAAAGVVFIVSLVAISIV) form a helical membrane-spanning segment. Over 563–984 (CSRKRAYSKE…QMSQSPTSMA (422 aa)) the chain is Cytoplasmic. The Protein kinase domain occupies 619-882 (VKIEEVIGAG…EIVNTLDKMI (264 aa)). Residues 625 to 633 (IGAGEFGEV) and lysine 651 contribute to the ATP site. Aspartate 744 (proton acceptor) is an active-site residue. Positions 911-975 (TAFTSVEDWL…LNSIQSMRVQ (65 aa)) constitute an SAM domain. The PDZ-binding signature appears at 982–984 (SMA).

Belongs to the protein kinase superfamily. Tyr protein kinase family. Ephrin receptor subfamily. Heterotetramer upon binding of the ligand. The heterotetramer is composed of an ephrin dimer and a receptor dimer. Oligomerization is probably required to induce biological responses. Phosphorylated. Autophosphorylation is stimulated by ligands. In terms of tissue distribution, expressed at high levels in the 10-day embryo, and in adult brain, lung, heart and skeletal muscle. Low levels of expression detected in all other adult tissues tested.

It is found in the cell membrane. Its subcellular location is the early endosome membrane. The protein localises to the cell projection. The protein resides in the dendrite. It carries out the reaction L-tyrosyl-[protein] + ATP = O-phospho-L-tyrosyl-[protein] + ADP + H(+). Its function is as follows. Receptor tyrosine kinase which binds promiscuously transmembrane ephrin-B family ligands residing on adjacent cells, leading to contact-dependent bidirectional signaling into neighboring cells. The signaling pathway downstream of the receptor is referred to as forward signaling while the signaling pathway downstream of the ephrin ligand is referred to as reverse signaling. May play a role in axon guidance during nervous system development. May also play an important redundant role with other ephrin-B receptors in development and maturation of dendritic spines and synapse formation. More generally, may play a role in targeted cell migration and adhesion. Upon activation by ephrin-B ligands activates the MAPK/ERK and the JNK signaling cascades to regulate cell migration and adhesion respectively. The sequence is that of Ephrin type-B receptor 1 (EPHB1) from Gallus gallus (Chicken).